The sequence spans 71 residues: Frenatin 2.3S (71 aa).

A signal peptide spans 1 to 22 (MAFLKKSLFLVLFLGLVSLSMG). A disordered region spans residues 21–56 (MGEREKREEEEEEEEENKEEEANEEGKGESEEKRGL). The propeptide occupies 23-54 (EREKREEEEEEEEENKEEEANEEGKGESEEKR). Over residues 28-43 (EEEEEEEEENKEEEAN) the composition is skewed to acidic residues. Residues 44–55 (EEGKGESEEKRG) show a composition bias toward basic and acidic residues. The residue at position 70 (Gly-70) is a Glycine amide; in Frenatin 2.1S.

Belongs to the frog skin active peptide (FSAP) family. Frenatin subfamily. Frenatin 2.3S is not amidated. In terms of tissue distribution, expressed by the skin glands.

It is found in the secreted. In terms of biological role, antimicrobial peptide with potent activity against Gram-negative bacteria. Shows immunostimulatory actions both in vitro and in vivo. In vitro, is cytotoxic to non-small cell lung adenocarcinoma A549 cells. Also, stimulates production of pro-inflammatory cytokines by mouse peritoneal macrophages and down-regulates production of the anti-inflammatory cytokine IL-10 by lipopolysaccharide (LPS)-stimulated cells. In vivo, intraperitoneal injection in mice enhances the activation state and homing capacity of Th1 type lymphocytes and promotes the recruitment, activation and tumoricidal capacities of peritoneal NK cells. Has a very weak activity in stimulation of insulin release and a weak hemolytic activity. Antimicrobial peptide with potent activity against some Gram-positive and Gram-negative bacteria. Has a multifunctional mode of action. It displays depolarization and bacterial cell leakage, and can also internalize into bacterial cells and alter specific gene expression involved in bacterial resistance mechanisms. Does not agglutinate bacteria and lipid vesicles, even a high concentrations. Also displays moderate cellular protection against yellow fever virus (YFV)-infected Vero cells without causing significant cytotoxicity. Shows a weak hemolytic activity, and is not cytotoxic to monocytes. Frenatin 2.3S (version without Gly-71) shows no or very weak antibacterial activity, shows no or very weak cytotoxicity to lung adenocarcinoma A549 cells and shows very weak hemolysis. It only stimulates production of pro-inflammatory cytokines IL-23 (but not IL-1beta and TNF-alpha) by mouse peritoneal macrophages and has no effect on the production of the anti-inflammatory cytokine IL-10. Frenatin 2.3S (version without Gly-71) very weakly stimulates insulin release. In Sphaenorhynchus lacteus (Orinoco lime treefrog), this protein is Frenatin 2.3S.